Here is a 124-residue protein sequence, read N- to C-terminus: Putative melanoma-associated antigen 5P (124 aa).

Over residues 1–14 the composition is skewed to basic and acidic residues; it reads MSLEQKSQHCKPEE. Disordered stretches follow at residues 1–69 and 82–103; these read MSLE…QGAS and QSIKGSSNQEEEGPSTSPDPES. Residues 3 to 124 form the MAGE domain; that stretch reads LEQKSQHCKP…DLIHFLLLKY (122 aa). Composition is skewed to polar residues over residues 30-44 and 82-100; these read AATTEEQEAVSSSSP and QSIKGSSNQEEEGPSTSPD.

In terms of tissue distribution, expressed in many tumors of several types, such as melanoma, head and neck squamous cell carcinoma, lung carcinoma and breast carcinoma, but not in normal tissues except for testes.

Its function is as follows. May negatively regulates apoptosis. This chain is Putative melanoma-associated antigen 5P, found in Homo sapiens (Human).